We begin with the raw amino-acid sequence, 181 residues long: Large ribosomal subunit protein uL10 (181 aa).

The protein belongs to the universal ribosomal protein uL10 family. Part of the ribosomal stalk of the 50S ribosomal subunit. The N-terminus interacts with L11 and the large rRNA to form the base of the stalk. The C-terminus forms an elongated spine to which L12 dimers bind in a sequential fashion forming a multimeric L10(L12)X complex.

In terms of biological role, forms part of the ribosomal stalk, playing a central role in the interaction of the ribosome with GTP-bound translation factors. The sequence is that of Large ribosomal subunit protein uL10 from Bradyrhizobium diazoefficiens (strain JCM 10833 / BCRC 13528 / IAM 13628 / NBRC 14792 / USDA 110).